A 363-amino-acid polypeptide reads, in one-letter code: Dual-specificity RNA methyltransferase RlmN (363 aa).

Glutamate 102 functions as the Proton acceptor in the catalytic mechanism. The region spanning 108–344 (EKKRSTLCVS…TTTIRKNRGE (237 aa)) is the Radical SAM core domain. A disulfide bond links cysteine 115 and cysteine 350. [4Fe-4S] cluster-binding residues include cysteine 122, cysteine 126, and cysteine 129. S-adenosyl-L-methionine is bound by residues 174 to 175 (GE), serine 206, 228 to 230 (SLH), and asparagine 307. Cysteine 350 (S-methylcysteine intermediate) is an active-site residue.

It belongs to the radical SAM superfamily. RlmN family. Requires [4Fe-4S] cluster as cofactor.

The protein localises to the cytoplasm. It catalyses the reaction adenosine(2503) in 23S rRNA + 2 reduced [2Fe-2S]-[ferredoxin] + 2 S-adenosyl-L-methionine = 2-methyladenosine(2503) in 23S rRNA + 5'-deoxyadenosine + L-methionine + 2 oxidized [2Fe-2S]-[ferredoxin] + S-adenosyl-L-homocysteine. It carries out the reaction adenosine(37) in tRNA + 2 reduced [2Fe-2S]-[ferredoxin] + 2 S-adenosyl-L-methionine = 2-methyladenosine(37) in tRNA + 5'-deoxyadenosine + L-methionine + 2 oxidized [2Fe-2S]-[ferredoxin] + S-adenosyl-L-homocysteine. Functionally, specifically methylates position 2 of adenine 2503 in 23S rRNA and position 2 of adenine 37 in tRNAs. m2A2503 modification seems to play a crucial role in the proofreading step occurring at the peptidyl transferase center and thus would serve to optimize ribosomal fidelity. This is Dual-specificity RNA methyltransferase RlmN from Buchnera aphidicola subsp. Acyrthosiphon pisum (strain APS) (Acyrthosiphon pisum symbiotic bacterium).